The following is a 270-amino-acid chain: HTH-type transcriptional activator AllS (270 aa).

The HTH lysR-type domain maps to 4–61 (LDPETLRTFVSVAETGSFSRAAEKLYKTTATISYRIKLLEDNTGVALFSRTTRSVLLT). Positions 21–40 (FSRAAEKLYKTTATISYRIK) form a DNA-binding region, H-T-H motif.

Belongs to the LysR transcriptional regulatory family.

Positive regulator essential for the expression of allD operon. Binds to the allD promoter. In Klebsiella pneumoniae, this protein is HTH-type transcriptional activator AllS (allS).